We begin with the raw amino-acid sequence, 135 residues long: Protein PilG (135 aa).

One can recognise a Response regulatory domain in the interval 9-125 (KVMVIDDSKT…ELLGAIKAHV (117 aa)). Asp-58 is modified (4-aspartylphosphate).

In terms of processing, phosphorylated.

In terms of biological role, plays an essential role in both cAMP-dependent and independent regulation of twitching motility. Regulates the cAMP-independent coordination of type IV pilus (T4P) biogenesis and retraction that plays a role in surface and host cell adhesion, colonization, biofilm maturation, virulence, and twitching. In addition, phosphorylated PilG is necessary for cAMP production via regulation of the adenylate cyclase CyaB. Acts therefore as a response regulator of the chemosensory system/Chp system. The sequence is that of Protein PilG (pilG) from Pseudomonas aeruginosa (strain ATCC 15692 / DSM 22644 / CIP 104116 / JCM 14847 / LMG 12228 / 1C / PRS 101 / PAO1).